The chain runs to 306 residues: Ribonuclease H2 subunit B (306 aa).

The segment at 232 to 285 is disordered; the sequence is LPDLSSPTPEPPVKKRKVSEAPVEAEEDYTKFNSDSKNKKSNSKMTAAQKSLAK. Positions 259–269 are enriched in basic and acidic residues; sequence DYTKFNSDSKN.

This sequence belongs to the RNase H2 subunit B family. In terms of assembly, the RNase H2 complex is a heterotrimer composed of the catalytic subunit rnaseh2a and the non-catalytic subunits rnaseh2b and rnaseh2c.

It is found in the nucleus. Non catalytic subunit of RNase H2, an endonuclease that specifically degrades the RNA of RNA:DNA hybrids. Participates in DNA replication, possibly by mediating the removal of lagging-strand Okazaki fragment RNA primers during DNA replication. Mediates the excision of single ribonucleotides from DNA:RNA duplexes. The protein is Ribonuclease H2 subunit B (rnaseh2b) of Xenopus tropicalis (Western clawed frog).